Reading from the N-terminus, the 606-residue chain is NADH-ubiquinone oxidoreductase chain 5 (606 aa).

16 helical membrane-spanning segments follow: residues 1 to 21 (MNLF…PIMM), 35 to 55 (YVKN…MVYL), 87 to 107 (LMFM…SMWY), 114 to 134 (INQF…LVTA), 140 to 160 (LFIG…WWFG), 171 to 191 (AILY…WFLS), 211 to 233 (FPLM…HPWL), 241 to 261 (TPVS…FLLV), 272 to 292 (LIQT…AICA), 301 to 320 (IIAF…IGLN), 325 to 347 (AFLH…GSII), 366 to 386 (LPFT…MPFL), 413 to 433 (LIAT…ALLG), 457 to 477 (LLVG…PMTT), 482 to 502 (MPLH…IIAF), and 582 to 602 (GLIK…MILF).

It belongs to the complex I subunit 5 family. Core subunit of respiratory chain NADH dehydrogenase (Complex I) which is composed of 45 different subunits.

It localises to the mitochondrion inner membrane. The enzyme catalyses a ubiquinone + NADH + 5 H(+)(in) = a ubiquinol + NAD(+) + 4 H(+)(out). Functionally, core subunit of the mitochondrial membrane respiratory chain NADH dehydrogenase (Complex I) which catalyzes electron transfer from NADH through the respiratory chain, using ubiquinone as an electron acceptor. Essential for the catalytic activity and assembly of complex I. The protein is NADH-ubiquinone oxidoreductase chain 5 (MT-ND5) of Balaenoptera physalus (Fin whale).